The sequence spans 1467 residues: Helicase ARIP4 (1467 aa).

Disordered stretches follow at residues 1–150 (MSDE…YAAP) and 186–234 (DSSS…GGTH). Residues 11–49 (PDLDPDVELEDAEEEEEEEEVAVEECDRDDEEDLLDDPS) are compositionally biased toward acidic residues. Low complexity predominate over residues 72–82 (TSTTSSQSEPS). Residues 100 to 115 (KKRAQKPSHMRRNIRK) show a composition bias toward basic residues. Glycyl lysine isopeptide (Lys-Gly) (interchain with G-Cter in SUMO2) cross-links involve residues Lys-115 and Lys-127. Composition is skewed to basic and acidic residues over residues 133-147 (ELERRKRLEQQRKDY) and 192-201 (EDEKSSRDEV). Lys-272 participates in a covalent cross-link: Glycyl lysine isopeptide (Lys-Gly) (interchain with G-Cter in SUMO2). The Helicase ATP-binding domain maps to 292–512 (RFKTSSGFGC…WCMVDFVRPD (221 aa)). 305–312 (HSMGLGKT) is a binding site for ATP. The DEAH box motif lies at 463–466 (DEGH). Positions 551 to 555 (LHSLL) match the LXXLL motif 1 motif. Positions 649–673 (GSAGTSARCPPQGTKGKGEDSTLAS) are disordered. Glycyl lysine isopeptide (Lys-Gly) (interchain with G-Cter in SUMO2) cross-links involve residues Lys-665, Lys-682, Lys-759, Lys-901, Lys-1014, and Lys-1018. The Helicase C-terminal domain occupies 728–896 (HLIEESVKLG…RVVDDLNPML (169 aa)). The disordered stretch occupies residues 1120–1171 (RATGKPKVPEDGRMAASGSQGPSCESTSNGRHSASSPKAPDPEGLARPVSPD). Polar residues predominate over residues 1136–1155 (SGSQGPSCESTSNGRHSASS). Ser-1169 and Ser-1172 each carry phosphoserine. Disordered stretches follow at residues 1184–1221 (DVAAARESRQSSPSTNAALPGPPAQLMDSSAVPGTALG) and 1247–1284 (PVLDLRGHKRKLATPPAAQESSRRRSRKGHLPAPVQPY). Thr-1260 carries the phosphothreonine modification. Positions 1329–1333 (LSNLL) match the LXXLL motif 2 motif. The interval 1445-1467 (AEVGFSSNDDEDKDDDVIEVTGK) is disordered. The segment covering 1452 to 1467 (NDDEDKDDDVIEVTGK) has biased composition (acidic residues).

This sequence belongs to the SNF2/RAD54 helicase family. In terms of assembly, interacts with AR via its N-terminus. Interacts with DYRK1A. Binds DNA and mononucleosomes, but does not seem to form large multiprotein complexes. In terms of processing, sumoylated.

It localises to the nucleus. The enzyme catalyses ATP + H2O = ADP + phosphate + H(+). Its activity is regulated as follows. Enzyme activity is enhanced by dsDNA (double-stranded DNA) and ssDNA (single-stranded DNA). Functionally, DNA helicase that modulates androgen receptor (AR)-dependent transactivation in a promoter-dependent manner. Not able to remodel mononucleosomes in vitro. The protein is Helicase ARIP4 (RAD54L2) of Homo sapiens (Human).